The following is a 454-amino-acid chain: Innexin-19 (454 aa).

Topologically, residues 1–48 (MWRTPASTGPLRQDRQMFFHATLARSFINALSVRGDDDAVDRLNYYYT) are cytoplasmic. The chain crosses the membrane as a helical span at residues 49–69 (PLILAVCCLVISAKQYGGTPI). The Extracellular segment spans residues 70–118 (ECWVNPHSRESMEEYIESYCWIQNTYWIPMYENVPDDHTAREEKQIGYY). Residues 119–139 (QWVPFILIAEALMFSLPCIFW) form a helical membrane-spanning segment. Residues 140–214 (RLCSFQSGLN…SRFLSGQCLS (75 aa)) are Cytoplasmic-facing. The helical transmembrane segment at 215–235 (ILHSFTKLLYSMNVVAQFLIL) threads the bilayer. Residues 236–300 (NACLKSSDFL…ALLINIINEK (65 aa)) are Extracellular-facing. The helical transmembrane segment at 301-321 (VFAFLWCWYMILAIITTCSFI) threads the bilayer. At 322–454 (YWIANSFIHS…SNPGQTKSFL (133 aa)) the chain is on the cytoplasmic side.

Belongs to the pannexin family. As to expression, specifically expressed in sensory neurons and interneurons in the head and tail. Expressed in neurons AWC, ASH, AFD, ASI, ADL, ASK, BAG, AWB, and ADF (head sensory neurons); ADA, AIZ, RIC, AIY, and AIM (head interneurons); PHA and PHB (tail sensory neurons); and PVC and PVQ (tail interneurons).

It localises to the cell membrane. The protein resides in the cell junction. It is found in the gap junction. Its function is as follows. Structural component of the gap junctions that specifically coordinates left-right asymmetry in the developing nervous system. Acts by forming gap junction network linking embryonic neurons and providing electrical coupling between cells, leading to promote or inhibit AWC signaling. Required for the left and right AWC olfactory neurons to establish asymmetric patterns of gene expression during embryogenesis. Acts autonomously. The protein is Innexin-19 (inx-19) of Caenorhabditis elegans.